Consider the following 364-residue polypeptide: MRKRISAIINKLNISIMMMIVVLMIGCGQQPEAGKTGAAGGEKQGAGSLSEVLMEVGKSAENAFYSFLELVSDTLGFTAKSTTKKEDVGGYFNSLGGKLGEASNELEQVAKNSEAGIEKNDASKNPIRSAVNAAKKTLEALKGYLDSLGTVGDSNPVGWASNNAQGAAVDEAELKKAYKALKGIMDTAEGAGVARPEVGNIAVKVGNGTDNKDGAKILATDGAAAVGDAGKAAAILTTVSGKEMLASIVNSTEDKAVKITGNVTVETTPLEFAVGGNGAHLSQNANSKAAAVAGGIALRSLVKGGKLAADNNDDDKASQGVGITAANKLLVAVEDIIKKTVKNVLEKAKGEIDKARDPKPAGQQ.

A signal peptide spans 1-26; that stretch reads MRKRISAIINKLNISIMMMIVVLMIG. Cys27 carries the N-palmitoyl cysteine lipid modification. Residue Cys27 is the site of S-diacylglycerol cysteine attachment.

The protein belongs to the variable large protein (Vlp) family. Alpha subfamily.

It localises to the cell outer membrane. In terms of biological role, the Vlp and Vsp proteins are antigenically distinct proteins, only one vlp or vsp gene is transcriptionally active at any one time. Switching between these genes is a mechanism of host immune response evasion. The chain is Variable large protein 21 from Borrelia hermsii.